The following is a 224-amino-acid chain: Cell division protein SepF (224 aa).

The disordered stretch occupies residues 21–78; that stretch reads DDYYEDDDRGPAPRGYRRPREDRFEDEGYAPRGYDGHPEDRRRDYDEPPAYRAGLAGG. The segment covering 54–66 has biased composition (basic and acidic residues); the sequence is YDGHPEDRRRDYD.

The protein belongs to the SepF family. In terms of assembly, homodimer. Interacts with FtsZ.

The protein resides in the cytoplasm. Functionally, cell division protein that is part of the divisome complex and is recruited early to the Z-ring. Probably stimulates Z-ring formation, perhaps through the cross-linking of FtsZ protofilaments. Its function overlaps with FtsA. This Mycolicibacterium gilvum (strain PYR-GCK) (Mycobacterium gilvum (strain PYR-GCK)) protein is Cell division protein SepF.